The chain runs to 429 residues: Serine--tRNA ligase (429 aa).

Position 236–238 (236–238 (TAE)) interacts with L-serine. 267 to 269 (RSE) is a binding site for ATP. L-serine is bound at residue E290. Position 354-357 (354-357 (EVSS)) interacts with ATP. S390 contacts L-serine.

This sequence belongs to the class-II aminoacyl-tRNA synthetase family. Type-1 seryl-tRNA synthetase subfamily. As to quaternary structure, homodimer. The tRNA molecule binds across the dimer.

It is found in the cytoplasm. The enzyme catalyses tRNA(Ser) + L-serine + ATP = L-seryl-tRNA(Ser) + AMP + diphosphate + H(+). It carries out the reaction tRNA(Sec) + L-serine + ATP = L-seryl-tRNA(Sec) + AMP + diphosphate + H(+). Its pathway is aminoacyl-tRNA biosynthesis; selenocysteinyl-tRNA(Sec) biosynthesis; L-seryl-tRNA(Sec) from L-serine and tRNA(Sec): step 1/1. Its function is as follows. Catalyzes the attachment of serine to tRNA(Ser). Is also able to aminoacylate tRNA(Sec) with serine, to form the misacylated tRNA L-seryl-tRNA(Sec), which will be further converted into selenocysteinyl-tRNA(Sec). This is Serine--tRNA ligase from Wigglesworthia glossinidia brevipalpis.